We begin with the raw amino-acid sequence, 89 residues long: Small ribosomal subunit protein uS15 (89 aa).

It belongs to the universal ribosomal protein uS15 family. Part of the 30S ribosomal subunit. Forms a bridge to the 50S subunit in the 70S ribosome, contacting the 23S rRNA.

One of the primary rRNA binding proteins, it binds directly to 16S rRNA where it helps nucleate assembly of the platform of the 30S subunit by binding and bridging several RNA helices of the 16S rRNA. Functionally, forms an intersubunit bridge (bridge B4) with the 23S rRNA of the 50S subunit in the ribosome. In Ectopseudomonas mendocina (strain ymp) (Pseudomonas mendocina), this protein is Small ribosomal subunit protein uS15.